Reading from the N-terminus, the 67-residue chain is Coiled-coil domain-containing protein 179 (67 aa).

Disordered regions lie at residues methionine 1–valine 32 and arginine 47–threonine 67. A coiled-coil region spans residues serine 27–phenylalanine 53.

This chain is Coiled-coil domain-containing protein 179 (Ccdc179), found in Mus musculus (Mouse).